The sequence spans 203 residues: uncharacterized protein (203 aa).

The Fe cation site is built by His34, Glu97, and His172.

This sequence belongs to the hemerythrin family.

The protein localises to the mitochondrion. This is an uncharacterized protein from Schizosaccharomyces pombe (strain 972 / ATCC 24843) (Fission yeast).